Consider the following 294-residue polypeptide: Shikimate dehydrogenase (NADP(+)) (294 aa).

Residues 22–24 and Ser-69 each bind shikimate; that span reads SLS. Lys-73 serves as the catalytic Proton acceptor. Residues Asn-94 and Asp-111 each contribute to the shikimate site. NADP(+) contacts are provided by residues 135 to 139 and Leu-236; that span reads GAGGA. Tyr-238 is a shikimate binding site. Gly-260 provides a ligand contact to NADP(+).

It belongs to the shikimate dehydrogenase family. Homodimer.

It catalyses the reaction shikimate + NADP(+) = 3-dehydroshikimate + NADPH + H(+). Its pathway is metabolic intermediate biosynthesis; chorismate biosynthesis; chorismate from D-erythrose 4-phosphate and phosphoenolpyruvate: step 4/7. Involved in the biosynthesis of the chorismate, which leads to the biosynthesis of aromatic amino acids. Catalyzes the reversible NADPH linked reduction of 3-dehydroshikimate (DHSA) to yield shikimate (SA). The polypeptide is Shikimate dehydrogenase (NADP(+)) (Streptococcus equi subsp. zooepidemicus (strain H70)).